The primary structure comprises 772 residues: Protein U58 (772 aa).

This sequence belongs to the herpesviridae UL87 family.

The sequence is that of Protein U58 (U58) from Human herpesvirus 6B (strain Z29) (HHV-6 variant B).